A 189-amino-acid polypeptide reads, in one-letter code: Small ribosomal subunit protein uS5 (189 aa).

One can recognise an S5 DRBM domain in the interval 22–85; sequence FVDKLVAINR…ESAKRDLIFV (64 aa).

This sequence belongs to the universal ribosomal protein uS5 family. As to quaternary structure, part of the 30S ribosomal subunit. Contacts proteins S4 and S8.

Its function is as follows. With S4 and S12 plays an important role in translational accuracy. In terms of biological role, located at the back of the 30S subunit body where it stabilizes the conformation of the head with respect to the body. This is Small ribosomal subunit protein uS5 from Agrobacterium fabrum (strain C58 / ATCC 33970) (Agrobacterium tumefaciens (strain C58)).